The following is a 597-amino-acid chain: MNKSKIRNFSIIAHIDHGKSTLADRILEITQTVSTRELKAQHLDSMDLEQERGITIKLNAVQIKYKDYIFHLIDTPGHVDFTYEVSRSLAASEGALLLVDATQGIEAQTLANAYLALENNLKIIPIINKIDLPSADPERIKGEIEEVIGISAKDTILISAKSGLNVEKVLEEIVDKISYPIDADDDKPLKALVFDSYFDAYRGVILLVRIFEGKIAVNDQFKFISTNKQFHVIELGVRTPTEVKKPFLESGEVGWIAASIRDAKDVSVGDTLTLVKNPTKEALPGYKKVKAVVFTGFYPIDGKDYPVLKESLEKISLSDSSITWELESSKALGFGFRVGFLGMLHMEVLQERLKREFNIDIIATAPSVEYKVYLTNNKVEIVSNPSDLPDRNYIKNIKEPFIRSFILVTEEFIGGIMELCQSKRGVYVNIEYIDKRVKIIYELPLSEIILDFFDKLKSISKGYASFDYEFIEYRDADLVKVDILLNKEKVDAFSFISHRENAYERSKELALKLKDVIPKQSFEIPIQAIIGAKVIARETIKAYRKDVTAKLYGGDVTRRQKLLKKQKEGKKRMKSIGSVEVPQEAFLSVLKSNMDKK.

A tr-type G domain is found at 4–181; sequence SKIRNFSIIA…EIVDKISYPI (178 aa). GTP-binding positions include 16–21 and 128–131; these read DHGKST and NKID.

Belongs to the TRAFAC class translation factor GTPase superfamily. Classic translation factor GTPase family. LepA subfamily.

Its subcellular location is the cell membrane. It catalyses the reaction GTP + H2O = GDP + phosphate + H(+). In terms of biological role, required for accurate and efficient protein synthesis under certain stress conditions. May act as a fidelity factor of the translation reaction, by catalyzing a one-codon backward translocation of tRNAs on improperly translocated ribosomes. Back-translocation proceeds from a post-translocation (POST) complex to a pre-translocation (PRE) complex, thus giving elongation factor G a second chance to translocate the tRNAs correctly. Binds to ribosomes in a GTP-dependent manner. In Mycoplasmopsis pulmonis (strain UAB CTIP) (Mycoplasma pulmonis), this protein is Elongation factor 4.